A 175-amino-acid polypeptide reads, in one-letter code: Large ribosomal subunit protein bL17 (175 aa).

Residues 127-175 (GEAEAATKRAVKEDALKKDEAPAAESVEDAKPAEDAPAAEAADDKGKDA) are disordered. Residues 131–147 (AATKRAVKEDALKKDEA) show a composition bias toward basic and acidic residues.

This sequence belongs to the bacterial ribosomal protein bL17 family. In terms of assembly, part of the 50S ribosomal subunit. Contacts protein L32.

This chain is Large ribosomal subunit protein bL17, found in Streptomyces griseus subsp. griseus (strain JCM 4626 / CBS 651.72 / NBRC 13350 / KCC S-0626 / ISP 5235).